The following is a 282-amino-acid chain: Putative dolichyldiphosphatase (282 aa).

The next 2 membrane-spanning stretches (helical) occupy residues 26–46 and 93–113; these read LLCA…ATLI and MPSS…LFLL. A disordered region spans residues 121-153; sequence QQQQQQQKQKQRERKKQVTNVKTTTTNGSGNGS. Residues 138 to 148 are compositionally biased toward low complexity; that stretch reads VTNVKTTTTNG. The next 2 membrane-spanning stretches (helical) occupy residues 173–193 and 207–227; these read WSFA…GAVA and VLVG…VTHV.

Belongs to the dolichyldiphosphatase family.

The protein localises to the endoplasmic reticulum membrane. The catalysed reaction is a di-trans,poly-cis-dolichyl diphosphate + H2O = a di-trans,poly-cis-dolichyl phosphate + phosphate + H(+). It participates in protein modification; protein glycosylation. In Neurospora crassa (strain ATCC 24698 / 74-OR23-1A / CBS 708.71 / DSM 1257 / FGSC 987), this protein is Putative dolichyldiphosphatase.